The sequence spans 285 residues: Single myb histone 3 (285 aa).

Residues 1 to 35 (MGAPKQKWTSEEEDALRRGVRKHGAGKWRTIQKDP) are disordered. An HTH myb-type domain is found at 1-60 (MGAPKQKWTSEEEDALRRGVRKHGAGKWRTIQKDPQFSPILSSRSNIDLKDKWRNLSFSA). The segment at residues 28-56 (WRTIQKDPQFSPILSSRSNIDLKDKWRNL) is a DNA-binding region (H-T-H motif). The 69-residue stretch at 113-181 (TPPKYGAMIM…KVDNFYRLPD (69 aa)) folds into the H15 domain. Positions 226–255 (VKVTDAEAKAHDAHDQMMEAERMLKMAEDT) form a coiled coil.

The protein belongs to the histone H1/H5 family. SMH subfamily. Forms a homodimer and heterodimers.

It localises to the nucleus. Its subcellular location is the chromosome. The protein resides in the nucleolus. The protein localises to the telomere. Binds preferentially double-stranded telomeric repeats, but may also bind to the single telomeric strand. The polypeptide is Single myb histone 3 (SMH3) (Zea mays (Maize)).